A 646-amino-acid polypeptide reads, in one-letter code: Kinesin-like protein klp-20 (646 aa).

The Kinesin motor domain maps to 6-331 (KVKVVVRCRP…LRYANRAKNI (326 aa)). An ATP-binding site is contributed by 91–98 (GQTGTGKT). A coiled-coil region spans residues 342–552 (KDAQLRKFQL…LRKELLLNIA (211 aa)). Positions 525 to 550 (LEEDHQRQVEAMLDDIRQLRKELLLN) are interaction with klp-11. The disordered stretch occupies residues 623 to 646 (TAEHRPRTSSKKHRASIRLQQLLT). A compositionally biased stretch (basic residues) spans 629–638 (RTSSKKHRAS).

It belongs to the TRAFAC class myosin-kinesin ATPase superfamily. Kinesin family. Kinesin II subfamily. As to quaternary structure, component of the kinesin II motor complex, a heterotrimeric complex composed of kap-1, klp-11 and klp-20. Interacts (via C-terminus) with klp-11 (via C-terminus) to form a heterodimer. Furthermore, within the heterodimer, the C-termini of klp-20 and klp-11 interact to form a coiled coil (stalk) or tail domain, and this is necessary for association with kap-1, and kinesin II motor complex activity upon IFT cargo binding. Prior to cargo binding, the klp-11/klp-20 heterodimer is autoinhibited by the tail domain of the heterodimer, which folds onto the kinesin motor domain. Cargo binding to the heterodimer relieves the autoinhibition, and allows for an extended conformation of the tail domain, and function of the heterodimer.

Its subcellular location is the cell projection. It is found in the cilium. The protein resides in the cytoplasm. It localises to the cytoskeleton. Its function is as follows. Component of the kinesin II motor complex (composed of kap-1 and the heterodimeric motor proteins klp-11 and klp-20) which is required for intraflagellar transport (IFT). Heterodimerizes with klp-11 to form a 'processive' molecular motor upon IFT cargo binding, which, within the kinesin II motor complex, binds to and moves along microtubules in a unidirectional manner (without dissociation of the heterodimer), and in turn, is responsible for the IFT of cargo. Specifically, the kinesin II motor complex, together with the kinesin motor protein osm-3 moves along microtubules and is required for anterograde IFT along the middle segment of the sensory neuron cilia. In particular, the kinesin II motor complex delivers specific ciliary cargo proteins such as che-3 which are related to motility to ciliary tips. This is likely mediated by IFT complexes A and B. This chain is Kinesin-like protein klp-20, found in Caenorhabditis elegans.